The primary structure comprises 209 residues: Large ribosomal subunit protein uL3 (209 aa).

Residues 125–148 (RHGQSRGPMAHGSRYHRRPGSMGP) form a disordered region.

It belongs to the universal ribosomal protein uL3 family. In terms of assembly, part of the 50S ribosomal subunit. Forms a cluster with proteins L14 and L19.

Its function is as follows. One of the primary rRNA binding proteins, it binds directly near the 3'-end of the 23S rRNA, where it nucleates assembly of the 50S subunit. This Lysinibacillus sphaericus (strain C3-41) protein is Large ribosomal subunit protein uL3.